A 151-amino-acid polypeptide reads, in one-letter code: Large ribosomal subunit protein bL9 (151 aa).

This sequence belongs to the bacterial ribosomal protein bL9 family.

Its function is as follows. Binds to the 23S rRNA. The polypeptide is Large ribosomal subunit protein bL9 (Thermosipho melanesiensis (strain DSM 12029 / CIP 104789 / BI429)).